We begin with the raw amino-acid sequence, 208 residues long: Inactive ribonuclease-like protein 10 (208 aa).

An N-terminal signal peptide occupies residues 1–24; it reads MKVTLVHLLFMMLLLLLGLGLGLG. N-linked (GlcNAc...) asparagine glycans are attached at residues N125 and N147.

This sequence belongs to the pancreatic ribonuclease family. Post-translationally, the N-terminus is blocked. Glycosylated. As to expression, male-specific expression in proximal caput of the epididymis (at protein level).

It is found in the secreted. Its function is as follows. Secreted proximal epididymal protein required for post-testicular sperm maturation and male fertility. May be involved in sperm adhesion to the egg zona pellucida. Does not have ribonuclease activity. In Mus musculus (Mouse), this protein is Inactive ribonuclease-like protein 10 (Rnase10).